A 402-amino-acid chain; its full sequence is Beta-ketoacyl-[acyl-carrier-protein] synthase III B, chloroplastic (402 aa).

Catalysis depends on residues cysteine 178, histidine 328, and asparagine 358.

It belongs to the thiolase-like superfamily. FabH family.

The protein resides in the plastid. The protein localises to the chloroplast. It carries out the reaction malonyl-[ACP] + acetyl-CoA + H(+) = 3-oxobutanoyl-[ACP] + CO2 + CoA. Its pathway is lipid metabolism; fatty acid biosynthesis. Catalyzes the condensation reaction of fatty acid synthesis by the addition to an acyl acceptor of two carbons from malonyl-ACP. KAS III catalyzes the first condensation reaction which initiates fatty acid synthesis and may therefore play a role in governing the total rate of fatty acid production. Possesses both acetoacetyl-ACP synthase and acetyl transacylase activities. In Cuphea wrightii (Wright's waxweed), this protein is Beta-ketoacyl-[acyl-carrier-protein] synthase III B, chloroplastic (KAS3B).